The chain runs to 124 residues: Small ribosomal subunit protein uS12 (124 aa).

Positions 1–28 are disordered; the sequence is MPTINQLVRKGRTPKVSKTKAPALKGSP. A compositionally biased stretch (basic residues) spans 9–18; that stretch reads RKGRTPKVSK. A 3-methylthioaspartic acid modification is found at Asp-89.

The protein belongs to the universal ribosomal protein uS12 family. As to quaternary structure, part of the 30S ribosomal subunit. Contacts proteins S8 and S17. May interact with IF1 in the 30S initiation complex.

In terms of biological role, with S4 and S5 plays an important role in translational accuracy. Its function is as follows. Interacts with and stabilizes bases of the 16S rRNA that are involved in tRNA selection in the A site and with the mRNA backbone. Located at the interface of the 30S and 50S subunits, it traverses the body of the 30S subunit contacting proteins on the other side and probably holding the rRNA structure together. The combined cluster of proteins S8, S12 and S17 appears to hold together the shoulder and platform of the 30S subunit. The protein is Small ribosomal subunit protein uS12 of Paenarthrobacter aurescens (strain TC1).